The chain runs to 62 residues: UPF0339 protein Atu0232 (62 aa).

It belongs to the UPF0339 family.

This Agrobacterium fabrum (strain C58 / ATCC 33970) (Agrobacterium tumefaciens (strain C58)) protein is UPF0339 protein Atu0232.